The primary structure comprises 391 residues: Immediate-early protein 2 (391 aa).

This sequence belongs to the herpesviridae US22 family.

It is found in the host cytoplasm. It localises to the host nucleus. Functionally, involved in the reactivation of latent MCMV in spleen cells. In Murid herpesvirus 1 (strain Smith) (MuHV-1), this protein is Immediate-early protein 2 (IE2).